We begin with the raw amino-acid sequence, 27 residues long: Potassium channel toxin kappa-KTx 2.2 (27 aa).

2 disulfide bridges follow: cysteine 3–cysteine 21 and cysteine 7–cysteine 17.

It belongs to the short scorpion toxin superfamily. Potassium channel inhibitor kappa-KTx family. Kappa-KTx 2 subfamily. Expressed by the venom gland.

It is found in the secreted. OmTx1 decreases the amplitude of the potassium current of the rat channels Kv1.1/KCNA1 by 17% and Kv1.2/KCNA2 by 12% as well as human Kv1.3/KCNA3 by 24%. Functionally, omTx2 decreases the amplitude of the potassium current of the rat channels Kv1.1/KCNA1 by 8% and Kv1.2/KCNA2 by 10% as well as human Kv1.3/KCNA3 by 36%. Also alters glucose-induced insulin release from pancreatic islets. The chain is Potassium channel toxin kappa-KTx 2.2 from Opisthacanthus madagascariensis (Scorpion).